The primary structure comprises 262 residues: Proliferating cell nuclear antigen (262 aa).

Residues 61 to 80 (RCDRNIAMGVNLNSMSKILK) mediate DNA binding. Residue Lys164 forms a Glycyl lysine isopeptide (Lys-Gly) (interchain with G-Cter in ubiquitin) linkage.

The protein belongs to the PCNA family. Homotrimer. Forms a complex with activator 1 heteropentamer in the presence of ATP. Component of the replisome complex. Monoubiquitinated by the UBE2B-RAD18 complex on Lys-164. Monoubiquitination at Lys-164 also takes place in undamaged proliferating cells, and is mediated by the DCX(DTL) complex, leading to enhance PCNA-dependent translesion DNA synthesis.

Its subcellular location is the nucleus. In terms of biological role, this protein is an auxiliary protein of DNA polymerase delta and is involved in the control of eukaryotic DNA replication by increasing the polymerase's processibility during elongation of the leading strand. The chain is Proliferating cell nuclear antigen (PCNA) from Coturnix japonica (Japanese quail).